We begin with the raw amino-acid sequence, 228 residues long: Urease accessory protein UreF 1 (228 aa).

Belongs to the UreF family. In terms of assembly, ureD, UreF and UreG form a complex that acts as a GTP-hydrolysis-dependent molecular chaperone, activating the urease apoprotein by helping to assemble the nickel containing metallocenter of UreC. The UreE protein probably delivers the nickel.

It localises to the cytoplasm. Functionally, required for maturation of urease via the functional incorporation of the urease nickel metallocenter. The sequence is that of Urease accessory protein UreF 1 from Brucella canis (strain ATCC 23365 / NCTC 10854 / RM-666).